The chain runs to 142 residues: uncharacterized protein (142 aa).

Positions 19 to 54 (IHTTPHPHTPHHTHHTHTTPTPTPHPHTHTPTPERS) are disordered. Residues 26–35 (HTPHHTHHTH) are compositionally biased toward basic residues.

This is an uncharacterized protein from Saccharomyces cerevisiae (strain ATCC 204508 / S288c) (Baker's yeast).